Here is a 338-residue protein sequence, read N- to C-terminus: Ribosomal RNA small subunit methyltransferase H (338 aa).

Residues 46–48 (GGY), Asp63, Phe90, Asp106, and Gln113 each bind S-adenosyl-L-methionine.

It belongs to the methyltransferase superfamily. RsmH family.

The protein resides in the cytoplasm. The enzyme catalyses cytidine(1402) in 16S rRNA + S-adenosyl-L-methionine = N(4)-methylcytidine(1402) in 16S rRNA + S-adenosyl-L-homocysteine + H(+). Its function is as follows. Specifically methylates the N4 position of cytidine in position 1402 (C1402) of 16S rRNA. This chain is Ribosomal RNA small subunit methyltransferase H, found in Mesorhizobium japonicum (strain LMG 29417 / CECT 9101 / MAFF 303099) (Mesorhizobium loti (strain MAFF 303099)).